The following is a 558-amino-acid chain: Ankyrin repeat protein OPG189 (558 aa).

ANK repeat units follow at residues 65-95 (YGEN…NINK), 169-205 (YGCT…DVDK), 209-239 (YGNT…NIDS), 243-272 (NRYT…NVNA), 276-304 (FGTT…ELEI), 339-368 (YNET…DFET), and 372-401 (SGCT…SLKI).

The protein belongs to the orthopoxvirus OPG189 protein family.

Functionally, contributes to viral release without involving rearrangement of host actin. The polypeptide is Ankyrin repeat protein OPG189 (OPG189) (Homo sapiens (Human)).